Reading from the N-terminus, the 282-residue chain is Homeobox protein pv.1 (282 aa).

2 stretches are compositionally biased toward basic and acidic residues: residues 17–26 (EEAADGKDSM) and 44–59 (YAKE…DVQE). The segment at 17-128 (EEAADGKDSM…HRGESPKSDL (112 aa)) is disordered. Composition is skewed to polar residues over residues 86-96 (WGSSDDFSSVG) and 103-114 (EGSPSPMRNSQE). Residues 116 to 128 (ETDHRGESPKSDL) are compositionally biased toward basic and acidic residues. The segment at residues 129 to 188 (QRHLRTAFTPQQISKLEQAFNKQRYLGASERKKLATSLRLSEIQVKTWFQNRRMKLKRQI) is a DNA-binding region (homeobox).

In terms of tissue distribution, expressed in the ventral marginal zone of blastulae. At early gastrulation, expression begins to spread to the animal pole (ectoderm), and at stage 11.5 is expressed in a gradient across the animal cap, with levels highest in the ventral region. At the end of gastrulation, predominantly localized to the ventral and lateral regions of the closing slit blastopore. Also expressed at a low level in ventral endoderm.

Its subcellular location is the nucleus. Transcriptional repressor. Acts in a ventral signaling pathway downstream of bmp4, which suppresses dorsal mesoderm formation and leads to both ventral mesoderm and ventral ectoderm formation. Acts in the ectoderm to simultaneously specify epidermal lineages and restrict neuralization. Represses transcription of dorsal-specific genes. Binds to DNA, with preference for the target sequences 5'-TAATGC-3' and 5'-TAATTG-3'. Acts in a pathway downstream of bmp4 and fgf to negatively regulate erythroid specification. In Xenopus laevis (African clawed frog), this protein is Homeobox protein pv.1.